A 75-amino-acid polypeptide reads, in one-letter code: Antitoxin MT0312 (75 aa).

Its function is as follows. Antitoxin component of a type II toxin-antitoxin (TA) system. This chain is Antitoxin MT0312, found in Mycobacterium tuberculosis (strain CDC 1551 / Oshkosh).